The following is a 451-amino-acid chain: Penicillin-binding protein 4* (451 aa).

Serine 61 (acyl-ester intermediate) is an active-site residue.

This sequence belongs to the beta-lactamase family.

The protein localises to the forespore outer membrane. It functions in the pathway cell wall biogenesis; peptidoglycan biosynthesis. Probably involved in peptidoglycan modification during cortex synthesis. In Bacillus subtilis (strain 168), this protein is Penicillin-binding protein 4* (pbpE).